Reading from the N-terminus, the 273-residue chain is Shikimate dehydrogenase (NADP(+)) (273 aa).

Residues 14–16 and T59 contribute to the shikimate site; that span reads SLS. K63 functions as the Proton acceptor in the catalytic mechanism. Shikimate is bound by residues N84 and D99. Residues 122–126 and M212 contribute to the NADP(+) site; that span reads GAGGA. Position 214 (Y214) interacts with shikimate. Residue G235 coordinates NADP(+).

Belongs to the shikimate dehydrogenase family. As to quaternary structure, homodimer.

It carries out the reaction shikimate + NADP(+) = 3-dehydroshikimate + NADPH + H(+). The protein operates within metabolic intermediate biosynthesis; chorismate biosynthesis; chorismate from D-erythrose 4-phosphate and phosphoenolpyruvate: step 4/7. In terms of biological role, involved in the biosynthesis of the chorismate, which leads to the biosynthesis of aromatic amino acids. Catalyzes the reversible NADPH linked reduction of 3-dehydroshikimate (DHSA) to yield shikimate (SA). The polypeptide is Shikimate dehydrogenase (NADP(+)) (Aeropyrum pernix (strain ATCC 700893 / DSM 11879 / JCM 9820 / NBRC 100138 / K1)).